Here is a 59-residue protein sequence, read N- to C-terminus: UPF0391 membrane protein GbCGDNIH1_2123 (59 aa).

2 helical membrane-spanning segments follow: residues 6–26 (LALFFLVVSLIAGLFGFTGIS) and 35–55 (ILFVIFLIVFVVLLVMALAAG).

The protein belongs to the UPF0391 family.

It localises to the cell membrane. The protein is UPF0391 membrane protein GbCGDNIH1_2123 of Granulibacter bethesdensis (strain ATCC BAA-1260 / CGDNIH1).